Reading from the N-terminus, the 451-residue chain is GABA transporter 1 (451 aa).

Transmembrane regions (helical) follow at residues 35 to 55 (CGFHLTTSIVAPALLSLPYAF), 57 to 77 (FLGWAAGISCLVGGAAVTFYS), 115 to 135 (VGPIQMAVCYGVVIANALLGG), 153 to 173 (LFEFVIIFGCLLLVLAQFPSF), 182 to 202 (LSLLLCLLYSASAAAASIYIG), 222 to 242 (VFGIFNAMAIIATTYGNGIIP), 262 to 282 (MCYLVVIMTFFTVAITGYWAF), 308 to 328 (FIFLVNLFTVLQLSAVAVVYL), 356 to 376 (LVVRSLFVVMATIVAAMLPFF), 382 to 402 (LLGAFGFIPLDFVLPVVFFNF), and 411 to 431 (FIFWINTVIAVVFSCLGVIAM).

It belongs to the amino acid/polyamine transporter 2 family. Amino acid/auxin permease (AAAP) (TC 2.A.18.2) subfamily. In terms of tissue distribution, highly expressed in flowers and at lower levels in roots, leaves and stems.

The protein localises to the cell membrane. Functionally, high affinity gamma-aminobutyric acid (GABA) transporter probably involved in GABA uptake into cells. When expressed in a heterologous system (Xenopus oocytes), imports GABA, butylamine, beta- and L-Alanine, 5-aminovaleric acid, 6-aminocaproic acid and 8-aminocaprylic acid, but does not mediate the transport of proline or glycine betaine. This is GABA transporter 1 (GAT1) from Arabidopsis thaliana (Mouse-ear cress).